The following is a 476-amino-acid chain: Glycogen synthase (476 aa).

An ADP-alpha-D-glucose-binding site is contributed by Lys-15.

It belongs to the glycosyltransferase 1 family. Bacterial/plant glycogen synthase subfamily.

The enzyme catalyses [(1-&gt;4)-alpha-D-glucosyl](n) + ADP-alpha-D-glucose = [(1-&gt;4)-alpha-D-glucosyl](n+1) + ADP + H(+). Its pathway is glycan biosynthesis; glycogen biosynthesis. Its function is as follows. Synthesizes alpha-1,4-glucan chains using ADP-glucose. The protein is Glycogen synthase of Streptococcus agalactiae serotype III (strain NEM316).